The primary structure comprises 90 residues: KTLLLTLVVVTILCLDLGYTTKCYITPDVKSETCPDGENICYTKTWCDVWCGSRGRRVDLGCAATCPIVKPGVNINCCSTDNCNPFPKRS.

An N-terminal signal peptide occupies residues K1–T20. Cystine bridges form between C23–C41, C34–C62, C47–C51, C66–C77, and C78–C83.

Belongs to the three-finger toxin family. Long-chain subfamily. Type II alpha-neurotoxin sub-subfamily. As to expression, expressed by the venom gland.

The protein localises to the secreted. Its function is as follows. Binds with high affinity to muscular (alpha-1/CHRNA1) and neuronal (alpha-7/CHRNA7) nicotinic acetylcholine receptor (nAChR) and inhibits acetylcholine from binding to the receptor, thereby impairing neuromuscular and neuronal transmission. This is Long neurotoxin OH-34 from Ophiophagus hannah (King cobra).